Consider the following 1484-residue polypeptide: MSLSALLNNDDPVEDTKLYLESLNREMDRLIKRDQLELMYQDWKFANYQEFELISEWNTQCKELVGDGNDLQNNDLMTEEVHLDDLYDNIQRIRNEWKDYESYKETRSQLLSKSIQAKPIKHRRRRRTKLEMEAAANLAALSQMGTTDVKTPEIINDHGNRSKASRSDTTNKTDNTMAGINSPTSDVDSGHKDELDQTKLIKKQEASSSTNSAASVTASVANGIVEDQKDEAERTIEANRIGSNMQNSDQDTMDDLKKTNDPSSDIDSDANTSVNDGSDENLSNKLDSDDLHSEPADNEEEPVSSDAEKDQAENINQTDESEEEIIVKEYDDNNDEDFAPEIKKPKPNGKIVTINSDRPKIVRELIKLRNKGKAPKSSKRRYTAVNITEYSPTEKKISVKITLKQMHVKKLKKILQDARKAEEKRLQEEAKQIADQESPRKRRKIDRSENTKQEDEDDKEDDDLDGLPTYGMKMSLKDAKAIQRHYDNTYTMIWKDMARKDCMKISRLVQQIQSTRALNYKKTSSLCAREARKWQTRNFKQVKDFQTRARKGIREMANFWKKNEREERDLKKKAEREALELAKKEEEEKESKRQAKKLNFLLTQTELYSHFIGRKIKTSALEGNEVAEEDEDNYDLTTTAPNKNDFHAIDFDNENDEQLKLKAAQNASNALAETRAKAKAFDDAHRQQQSTESDDEEEMNFQNPTSLGEITIEQPKMLACTLKEYQLKGLNWLANLYDQGINGILADEMGLGKTVQSISVLAHLAEHHNIWGPFLVVTPASTLHNWVNEISKFVPQFKILPYWGSANDRKVLRKFWDRKNLRYSEKSPFHVMITSYQMVVADASYLQKMKWQYMILDEAQAIKSSQSSRWKNLLSFHCRNRLLLTGTPIQNNMQELWALLHFIMPSLFDSHDEFNEWFSRDIESHAEGNSSLNQQQLRRLHMILKPFMLRRIKKNVQSELGDKIEIDVMCDLTQRQTKLYQVLKSQMSSNYDAIENAAAEGSDIAGGGNSDQSIINAVMQFRKVCNHPDLFERADINSPFSFTSFGKTSSLISSSIATSGGLTETISELMYSSTNPINCAIPKLIYEDLILPNYNNSIDIMEKLLLSDFSIYDPVNNKEMCQYLGLLTGLAYGSFRKIHKSNYFERIINLKKESKQSSQNLITVVSNANDLIADSIVHADTNLPNLTGIRNDIYHNDYLNSIQPGYCPKVVAPPINFNVNGSLNFTNKMSSYLFNPVITTALSSIPPPTQYNMFVKKCIPIEEFPISEMYPNPLNKHFSSNISMPSMDRFITESAKLKKLDELLVELKKNDHRVLIYFQMTKMMDLMEEYLTYRQYNHIRLDGSSKLEDRRDLVHDWQTNPEIFIFLLSTRAGGLGINLTAADTVIFYDSDWNPTIDSQAMDRAHRLGQTKQVTVYRLLVRGTIEERMRDRAKQKEQVQQVVMEGKTKDTNIQTTHTRPEHEQLTPKSLSSEPEATNNLITVKN.

Disordered stretches follow at residues 149-193, 237-353, and 426-466; these read VKTP…GHKD, EANR…KIVT, and LQEE…DLDG. Positions 155 to 171 are enriched in basic and acidic residues; it reads INDHGNRSKASRSDTTN. Composition is skewed to polar residues over residues 172–187, 241–250, and 261–285; these read KTDN…TSDV, IGSNMQNSDQ, and DPSS…LSNK. Composition is skewed to basic and acidic residues over residues 286-295 and 426-439; these read LDSDDLHSEP and LQEE…QESP. Residues 404-462 are a coiled coil; it reads KQMHVKKLKKILQDARKAEEKRLQEEAKQIADQESPRKRRKIDRSENTKQEDEDDKEDD. Acidic residues predominate over residues 454–465; sequence EDEDDKEDDDLD. The 126-residue stretch at 493-618 folds into the DBINO domain; that stretch reads IWKDMARKDC…SHFIGRKIKT (126 aa). Residues 673-702 form a disordered region; that stretch reads ETRAKAKAFDDAHRQQQSTESDDEEEMNFQ. Residues 674-686 are compositionally biased toward basic and acidic residues; that stretch reads TRAKAKAFDDAHR. A Helicase ATP-binding domain is found at 734-906; that stretch reads ANLYDQGING…WALLHFIMPS (173 aa). Position 747–754 (747–754) interacts with ATP; the sequence is DEMGLGKT. The DEAQ box motif lies at 857–860; the sequence is DEAQ. A Helicase C-terminal domain is found at 1299 to 1463; that stretch reads KLDELLVELK…TTHTRPEHEQ (165 aa). A disordered region spans residues 1446-1484; the sequence is KTKDTNIQTTHTRPEHEQLTPKSLSSEPEATNNLITVKN. A compositionally biased stretch (polar residues) spans 1465–1484; sequence TPKSLSSEPEATNNLITVKN.

The protein belongs to the SNF2/RAD54 helicase family. As to quaternary structure, component of the INO80 chromatin-remodeling complex.

The protein resides in the nucleus. It catalyses the reaction ATP + H2O = ADP + phosphate + H(+). ATPase component of the INO80 complex which remodels chromatin by shifting nucleosomes and is involved in DNA repair. The protein is Chromatin-remodeling ATPase INO80 (INO80) of Candida glabrata (strain ATCC 2001 / BCRC 20586 / JCM 3761 / NBRC 0622 / NRRL Y-65 / CBS 138) (Yeast).